The sequence spans 1755 residues: Transposon Ty1-MR2 Gag-Pol polyprotein (1755 aa).

Polar residues-rich tracts occupy residues 1 to 10 (MESQQLSNYP), 48 to 60 (TKAN…TPAS), and 127 to 152 (QSQF…GNTF). Disordered stretches follow at residues 1-93 (MESQ…MMTQ), 126-173 (PQSQ…RPPP), and 352-421 (GSRN…SKST). Residues 153 to 165 (TDSSSADSDMTST) show a composition bias toward low complexity. The RNA-binding stretch occupies residues 299–401 (NNGIHINNKV…NSKSKTARAH (103 aa)). Low complexity predominate over residues 402 to 418 (NVSTSNNSPSTDNDSIS). Ser-416 carries the phosphoserine modification. The active-site For protease activity; shared with dimeric partner is the Asp-461. Residues 583–640 (NVHTSESTRKYPYPFIHRMLAHANAQTIRYSLKNNTITYFNESDVDWSSAIDYQCPDC) form an integrase-type zinc finger-like region. The Integrase catalytic domain maps to 660–835 (NSYEPFQYLH…AGLDISTLLP (176 aa)). Mg(2+)-binding residues include Asp-671 and Asp-736. Disordered regions lie at residues 956 to 1087 (SKAV…ETEK), 1092 to 1111 (RSPS…NIVP), and 1130 to 1186 (DLPL…EDNE). Residues 960–969 (SPTDSTPPST) show a composition bias toward low complexity. A compositionally biased stretch (polar residues) spans 1005–1015 (STPQISNIEST). Over residues 1038–1053 (ESSHASKSKDFRHSDS) the composition is skewed to basic and acidic residues. Composition is skewed to polar residues over residues 1054–1082 (YSEN…QISD) and 1101–1111 (PENNSSHNIVP). The Bipartite nuclear localization signal signature appears at 1178 to 1212 (KKRSLEDNETEIKVSRDTWNTKNMRSLEPPRSKKR). The Reverse transcriptase Ty1/copia-type domain maps to 1338–1476 (NNYYITQLDI…DILGLEIKYQ (139 aa)). Asp-1346, Asp-1427, Asp-1428, Asp-1610, Glu-1652, and Asp-1685 together coordinate Mg(2+). The 143-residue stretch at 1610–1752 (DASYGNQPYY…IKTFKLLTNK (143 aa)) folds into the RNase H Ty1/copia-type domain.

As to quaternary structure, the capsid protein forms a homotrimer, from which the VLPs are assembled. The protease is a homodimer, whose active site consists of two apposed aspartic acid residues. Initially, virus-like particles (VLPs) are composed of the structural unprocessed proteins Gag and Gag-Pol, and also contain the host initiator methionine tRNA (tRNA(i)-Met) which serves as a primer for minus-strand DNA synthesis, and a dimer of genomic Ty RNA. Processing of the polyproteins occurs within the particle and proceeds by an ordered pathway, called maturation. First, the protease (PR) is released by autocatalytic cleavage of the Gag-Pol polyprotein yielding capsid protein p45 and a Pol-p154 precursor protein. This cleavage is a prerequisite for subsequent processing of Pol-p154 at the remaining sites to release the mature structural and catalytic proteins. Maturation takes place prior to the RT reaction and is required to produce transposition-competent VLPs.

Its subcellular location is the cytoplasm. It localises to the nucleus. It carries out the reaction DNA(n) + a 2'-deoxyribonucleoside 5'-triphosphate = DNA(n+1) + diphosphate. The catalysed reaction is Endonucleolytic cleavage to 5'-phosphomonoester.. Its function is as follows. Capsid protein (CA) is the structural component of the virus-like particle (VLP), forming the shell that encapsulates the retrotransposons dimeric RNA genome. The particles are assembled from trimer-clustered units and there are holes in the capsid shells that allow for the diffusion of macromolecules. CA also has nucleocapsid-like chaperone activity, promoting primer tRNA(i)-Met annealing to the multipartite primer-binding site (PBS), dimerization of Ty1 RNA and initiation of reverse transcription. Functionally, the aspartyl protease (PR) mediates the proteolytic cleavages of the Gag and Gag-Pol polyproteins after assembly of the VLP. Reverse transcriptase/ribonuclease H (RT) is a multifunctional enzyme that catalyzes the conversion of the retro-elements RNA genome into dsDNA within the VLP. The enzyme displays a DNA polymerase activity that can copy either DNA or RNA templates, and a ribonuclease H (RNase H) activity that cleaves the RNA strand of RNA-DNA heteroduplexes during plus-strand synthesis and hydrolyzes RNA primers. The conversion leads to a linear dsDNA copy of the retrotransposon that includes long terminal repeats (LTRs) at both ends. In terms of biological role, integrase (IN) targets the VLP to the nucleus, where a subparticle preintegration complex (PIC) containing at least integrase and the newly synthesized dsDNA copy of the retrotransposon must transit the nuclear membrane. Once in the nucleus, integrase performs the integration of the dsDNA into the host genome. The polypeptide is Transposon Ty1-MR2 Gag-Pol polyprotein (TY1B-MR2) (Saccharomyces cerevisiae (strain ATCC 204508 / S288c) (Baker's yeast)).